The following is a 460-amino-acid chain: Probable fibrosin-1 (460 aa).

Residue Lys8 forms a Glycyl lysine isopeptide (Lys-Gly) (interchain with G-Cter in SUMO2) linkage. 3 disordered regions span residues 40–79 (SLQG…FRPP), 205–311 (FAQK…KEEA), and 406–460 (YSRL…RADR). Over residues 212–223 (GAPPAFASPPDP) the composition is skewed to pro residues. Arg229 and Arg239 each carry asymmetric dimethylarginine. Over residues 248–272 (GSDKERPVERREPSITKEEKDRDLP) the composition is skewed to basic and acidic residues. Ser281 bears the Phosphoserine mark. Residues 288–311 (RAGEEGPRPTKESVRVKEERKEEA) show a composition bias toward basic and acidic residues. The span at 436–453 (APPPLVPAPRPSSPPRGP) shows a compositional bias: pro residues.

This is Probable fibrosin-1 (FBRS) from Homo sapiens (Human).